A 1428-amino-acid polypeptide reads, in one-letter code: DNA-directed RNA polymerase subunit beta' (1428 aa).

Zn(2+)-binding residues include C66, C68, C81, and C84. Mg(2+) contacts are provided by D472, D474, and D476. Zn(2+) contacts are provided by C816, C890, C897, and C900.

This sequence belongs to the RNA polymerase beta' chain family. In terms of assembly, the RNAP catalytic core consists of 2 alpha, 1 beta, 1 beta' and 1 omega subunit. When a sigma factor is associated with the core the holoenzyme is formed, which can initiate transcription. The cofactor is Mg(2+). Zn(2+) is required as a cofactor.

The catalysed reaction is RNA(n) + a ribonucleoside 5'-triphosphate = RNA(n+1) + diphosphate. In terms of biological role, DNA-dependent RNA polymerase catalyzes the transcription of DNA into RNA using the four ribonucleoside triphosphates as substrates. This chain is DNA-directed RNA polymerase subunit beta', found in Phocaeicola vulgatus (strain ATCC 8482 / DSM 1447 / JCM 5826 / CCUG 4940 / NBRC 14291 / NCTC 11154) (Bacteroides vulgatus).